We begin with the raw amino-acid sequence, 461 residues long: High-affinity Na(+)/H(+) antiporter NhaS3 (461 aa).

Transmembrane regions (helical) follow at residues 22-42 (TEIAPLVLAGVLLSLVVIYFA), 58-78 (VLGELVGGVLVGVSALKLLLF), 113-133 (SEVISVISELGVIILLFEIGL), 148-170 (AIVAVVGVVTPFSLGTIGLMTIF), 175-197 (IPAIFAGAALTATSIGITAKVLA), 209-229 (IIIGAAVLDDILGIIVLAVVG), 239-259 (ISNIIYLILSATGFVVGSILI), 280-300 (LLLVSICVAFVLSYIAQIVQL), 360-380 (GLIIAAFLILVAIVGKVVTGF), 391-411 (LAIGVGMIPRGEVGLVFAGVG), and 424-444 (AIIVMVIVTTFVAPPWLRAVF).

Belongs to the monovalent cation:proton antiporter 2 (CPA2) transporter (TC 2.A.37) family.

The protein resides in the cellular thylakoid membrane. Functionally, na(+)/H(+) antiporter that transports sodium from the cytoplasm into the thylakoid lumen in exchange for protons. Contributes to sodium homeostasis and tolerance. Also has Li(+)/H(+) antiport activity under K(+)-free conditions, but not under K(+)-rich conditions. The chain is High-affinity Na(+)/H(+) antiporter NhaS3 (nhaS3) from Synechocystis sp. (strain ATCC 27184 / PCC 6803 / Kazusa).